Reading from the N-terminus, the 320-residue chain is Malate dehydrogenase (320 aa).

Residues Gly-10–Gly-15 and Asp-34 contribute to the NAD(+) site. Substrate contacts are provided by Arg-83 and Arg-89. NAD(+) is bound by residues Asn-96 and Ile-119–Asn-121. The substrate site is built by Asn-121 and Arg-152. His-176 functions as the Proton acceptor in the catalytic mechanism.

Belongs to the LDH/MDH superfamily. MDH type 3 family.

It carries out the reaction (S)-malate + NAD(+) = oxaloacetate + NADH + H(+). Catalyzes the reversible oxidation of malate to oxaloacetate. The polypeptide is Malate dehydrogenase (Methylobacterium radiotolerans (strain ATCC 27329 / DSM 1819 / JCM 2831 / NBRC 15690 / NCIMB 10815 / 0-1)).